The primary structure comprises 309 residues: MPTASMTPNPFLSGSPEHAAAAGPLAAFAALPTGMQLAFAIVLGLVVGSFLNVVVHRLPIMMKRAWLAEIAEATGAPCADDSLPARYNLCVPRSACPHCGHALRAWENVPVLSYIALRGRCRHCRTPIGARYPLIELASGALAAGALALFGPSGAALAAFGLCAALLAMSAIDMQTGFLPDSLTLPLLWAGLCVNLWGTFASLRAAVIGAIAGYLFLWCILWLFKLLRGIEGIGYGDLKLLAALGAWLGWEALPQVVLIAAVAGAAVGLVATWRGRMRFEEPLPFGPFLAAGGAATLFFGTPFYLLLGG.

Residues 35-55 (MQLAFAIVLGLVVGSFLNVVV) traverse the membrane as a helical segment. Zn(2+) contacts are provided by Cys-96, Cys-99, Cys-121, and Cys-124. 6 consecutive transmembrane segments (helical) span residues 147–167 (LALFGPSGAALAAFGLCAALL), 183–203 (LTLPLLWAGLCVNLWGTFASL), 207–227 (VIGAIAGYLFLWCILWLFKLL), 230–250 (IEGIGYGDLKLLAALGAWLGW), 253–273 (LPQVVLIAAVAGAAVGLVATW), and 288–308 (FLAAGGAATLFFGTPFYLLLG).

The protein belongs to the peptidase A24 family. Requires Zn(2+) as cofactor.

It localises to the cell inner membrane. The enzyme catalyses Typically cleaves a -Gly-|-Phe- bond to release an N-terminal, basic peptide of 5-8 residues from type IV prepilin, and then N-methylates the new N-terminal amino group, the methyl donor being S-adenosyl-L-methionine.. Plays an essential role in type IV pili and type II pseudopili formation by proteolytically removing the leader sequence from substrate proteins and subsequently monomethylating the alpha-amino group of the newly exposed N-terminal phenylalanine. This is Prepilin leader peptidase/N-methyltransferase (gspO) from Burkholderia pseudomallei (strain 1026b).